A 149-amino-acid polypeptide reads, in one-letter code: Phosphoribosyl-AMP cyclohydrolase (149 aa).

Residue aspartate 92 coordinates Mg(2+). Cysteine 93 provides a ligand contact to Zn(2+). Positions 94 and 96 each coordinate Mg(2+). Residues cysteine 111 and cysteine 118 each contribute to the Zn(2+) site.

The protein belongs to the PRA-CH family. Homodimer. Requires Mg(2+) as cofactor. Zn(2+) serves as cofactor.

The protein resides in the cytoplasm. The catalysed reaction is 1-(5-phospho-beta-D-ribosyl)-5'-AMP + H2O = 1-(5-phospho-beta-D-ribosyl)-5-[(5-phospho-beta-D-ribosylamino)methylideneamino]imidazole-4-carboxamide. The protein operates within amino-acid biosynthesis; L-histidine biosynthesis; L-histidine from 5-phospho-alpha-D-ribose 1-diphosphate: step 3/9. Functionally, catalyzes the hydrolysis of the adenine ring of phosphoribosyl-AMP. In Rhizobium rhizogenes (strain K84 / ATCC BAA-868) (Agrobacterium radiobacter), this protein is Phosphoribosyl-AMP cyclohydrolase.